Consider the following 29-residue polypeptide: Galanin (29 aa).

Thr29 bears the Threonine amide mark.

This sequence belongs to the galanin family.

The protein localises to the secreted. In terms of biological role, contracts smooth muscle of the gastrointestinal and genitourinary tract, regulates growth hormone release, modulates insulin release, and may be involved in the control of adrenal secretion. The protein is Galanin (GAL) of Gallus gallus (Chicken).